The chain runs to 65 residues: Large ribosomal subunit protein uL29 (65 aa).

It belongs to the universal ribosomal protein uL29 family.

In Lactobacillus acidophilus (strain ATCC 700396 / NCK56 / N2 / NCFM), this protein is Large ribosomal subunit protein uL29.